A 375-amino-acid polypeptide reads, in one-letter code: Aminomethyltransferase (375 aa).

This sequence belongs to the GcvT family. As to quaternary structure, the glycine cleavage system is composed of four proteins: P, T, L and H.

It carries out the reaction N(6)-[(R)-S(8)-aminomethyldihydrolipoyl]-L-lysyl-[protein] + (6S)-5,6,7,8-tetrahydrofolate = N(6)-[(R)-dihydrolipoyl]-L-lysyl-[protein] + (6R)-5,10-methylene-5,6,7,8-tetrahydrofolate + NH4(+). In terms of biological role, the glycine cleavage system catalyzes the degradation of glycine. The polypeptide is Aminomethyltransferase (Symbiobacterium thermophilum (strain DSM 24528 / JCM 14929 / IAM 14863 / T)).